Consider the following 30-residue polypeptide: Conotoxin TVIIA (30 aa).

Disulfide bonds link C2-C14, C9-C19, and C13-C24. A 4-hydroxyproline mark is found at P10 and P11.

In terms of processing, three different forms of TVIIA exist. Pro-10 and Pro-11 of conotoxin TVIIA are hydroxylated in TVIIA, whereas Pro-10 is not hydroxylated in [Pro10]TVIIA and neither Pro-10 nor Pro-11 are hydroxylated in [Pro10,11]TVIIA. In terms of tissue distribution, expressed by the venom duct.

Its subcellular location is the secreted. Its function is as follows. By structural similarity with conotoxin GS, may inhibit the sodium channel (Nav). No effect was observed upon intracranial injections into mice and intraperitoneal injections into goldfish (25 ug). This Conus tulipa (Fish-hunting cone snail) protein is Conotoxin TVIIA.